The primary structure comprises 369 residues: uncharacterized protein (369 aa).

Transmembrane regions (helical) follow at residues 25–45 (QFVALSIWIILITLFSLWYDW), 47–67 (FCLLNLTIVGFFIAFCYFVPA), 119–139 (LNIVHLFVISGFHLSFLFNLM), 152–172 (LSGFAVLLIYLFLVGFAFSAL), 206–226 (HALNNFGFNFSFLACFVLLFV), 235–255 (LKPLVSSSLILIVISPLSLYL), 272–292 (PIALFYFCVSWIILPFIGVFG), 296–316 (FGIYLPLKMLSEWSLKVTVFL), and 323–343 (LIFFFVYYGLLGLLYTIFTVA).

It to B.subtilis ComEC.

It is found in the cell membrane. This is an uncharacterized protein from Mycoplasma genitalium (strain ATCC 33530 / DSM 19775 / NCTC 10195 / G37) (Mycoplasmoides genitalium).